Here is a 441-residue protein sequence, read N- to C-terminus: UBX domain-containing protein 6 (441 aa).

The tract at residues 1–10 (MKKFFQEIKA) is mediates interaction with LMAN1. 3 disordered regions span residues 12–57 (IKFK…MAAA), 62–81 (RLEQ…SIRN), and 86–113 (ELRA…EEGS). Basic and acidic residues predominate over residues 27–36 (VGEKAPKEKP). The segment at 51–63 (EAQMAAAAALARL) is VCP/p97-interacting motif (VIM). The PUB domain occupies 175–244 (VDTIAKYLDN…GPEEFYVLSE (70 aa)). The region spanning 332 to 408 (RKYTYTLLRV…GLVPSALLTF (77 aa)) is the UBX domain.

Interacts with VCP through the PUB domain (via C-terminus) and VIM motif (via N-terminus); the interaction is direct. Forms a ternary complex with CAV1 and VCP. Interacts with SYVN1. Interacts with HERPUD1. Interacts with VCPKMT. May interact with DERL1. Interacts with PLAA, VCP and YOD1; may form a complex involved in macroautophagy. Interacts with LMAN1.

It localises to the cytoplasm. The protein resides in the cytosol. Its subcellular location is the membrane. It is found in the nucleus. The protein localises to the cytoskeleton. It localises to the microtubule organizing center. The protein resides in the centrosome. Its subcellular location is the early endosome membrane. It is found in the late endosome membrane. The protein localises to the lysosome membrane. May negatively regulate the ATPase activity of VCP, an ATP-driven segregase that associates with different cofactors to control a wide variety of cellular processes. As a cofactor of VCP, it may play a role in the transport of CAV1 to lysosomes for degradation. It may also play a role in endoplasmic reticulum-associated degradation (ERAD) of misfolded proteins. Together with VCP and other cofactors, it may play a role in macroautophagy, regulating for instance the clearance of damaged lysosomes. The sequence is that of UBX domain-containing protein 6 from Bos taurus (Bovine).